A 77-amino-acid polypeptide reads, in one-letter code: uncharacterized protein (77 aa).

The disordered stretch occupies residues 54 to 77 (HHGRKHKEDMEARHEQLTKGGTIL). Basic and acidic residues predominate over residues 59-70 (HKEDMEARHEQL).

This is an uncharacterized protein from Escherichia coli O157:H7.